A 473-amino-acid polypeptide reads, in one-letter code: Aspartyl/glutamyl-tRNA(Asn/Gln) amidotransferase subunit B (473 aa).

Belongs to the GatB/GatE family. GatB subfamily. Heterotrimer of A, B and C subunits.

It carries out the reaction L-glutamyl-tRNA(Gln) + L-glutamine + ATP + H2O = L-glutaminyl-tRNA(Gln) + L-glutamate + ADP + phosphate + H(+). The catalysed reaction is L-aspartyl-tRNA(Asn) + L-glutamine + ATP + H2O = L-asparaginyl-tRNA(Asn) + L-glutamate + ADP + phosphate + 2 H(+). Its function is as follows. Allows the formation of correctly charged Asn-tRNA(Asn) or Gln-tRNA(Gln) through the transamidation of misacylated Asp-tRNA(Asn) or Glu-tRNA(Gln) in organisms which lack either or both of asparaginyl-tRNA or glutaminyl-tRNA synthetases. The reaction takes place in the presence of glutamine and ATP through an activated phospho-Asp-tRNA(Asn) or phospho-Glu-tRNA(Gln). The chain is Aspartyl/glutamyl-tRNA(Asn/Gln) amidotransferase subunit B from Francisella tularensis subsp. novicida (strain U112).